The chain runs to 307 residues: UDP-N-acetylenolpyruvoylglucosamine reductase (307 aa).

The FAD-binding PCMH-type domain occupies 33–198 (KVGGPVDILV…LEAILKLSLG (166 aa)). Residue arginine 177 is part of the active site. Residue serine 227 is the Proton donor of the active site. The active site involves glutamate 297.

The protein belongs to the MurB family. Requires FAD as cofactor.

It localises to the cytoplasm. It carries out the reaction UDP-N-acetyl-alpha-D-muramate + NADP(+) = UDP-N-acetyl-3-O-(1-carboxyvinyl)-alpha-D-glucosamine + NADPH + H(+). The protein operates within cell wall biogenesis; peptidoglycan biosynthesis. Its function is as follows. Cell wall formation. This Clostridium tetani (strain Massachusetts / E88) protein is UDP-N-acetylenolpyruvoylglucosamine reductase.